Consider the following 510-residue polypeptide: MEDRRESELKTFCSKNILVILGFSSIIAVIALLALGLTQNKPLPENVKFGIVLDAGSSHTSLYIYKWPAEKENDTGVVSQVEECKLKGPGISEFAKKLGEIDIYLEACMERARTVVPKSQHAETPVYLGATAGMRLLRMKNENLASKILSTVAESITRYPFDFQGARIITGQEEGAYGWITINYLLDKFIQKSGWFNLKPRKGDTQETYGALDLGGASTQITFVPQNQVLESPENTLHFRLYGKNYSVYTHSFLCYGKDQALLQKLTKDLKNTNGTIHEPCFHSGYQRRMNVSHLYEAPCTRRFLTSLPFPELEIQGTGDFQKCQQSIRPLFNTSYCPYSRCSFDGVFLPLPQGDFAAFSAFYYVMGFLNLTSEEGSFQSKVTSTLEAFCSRPWAELQMYFGDVKEKYLSEYCFSGTYILTLLLSGYHFTAETWKNIHFMGKVQSTSVGWTLGYMLNLTNMIPSEEPSSTRLSHSTYVFLMVLFSLILVIVVIIGLFVCHRPSYFWKDMV.

Residues 1-16 lie on the Cytoplasmic side of the membrane; it reads MEDRRESELKTFCSKN. Residues 17-37 form a helical membrane-spanning segment; it reads ILVILGFSSIIAVIALLALGL. Residues 38-477 lie on the Extracellular side of the membrane; it reads TQNKPLPENV…SSTRLSHSTY (440 aa). A glycan (N-linked (GlcNAc...) asparagine) is linked at N73. Cysteines 84 and 108 form a disulfide. E174 acts as the Proton acceptor in catalysis. Residues N245, N274, N291, and N333 are each glycosylated (N-linked (GlcNAc...) asparagine). Disulfide bonds link C255–C300 and C281–C324. A disulfide bridge links C337 with C342. The N-linked (GlcNAc...) asparagine glycan is linked to N370. An intrachain disulfide couples C390 to C413. N457 is a glycosylation site (N-linked (GlcNAc...) asparagine). A helical transmembrane segment spans residues 478–498; sequence VFLMVLFSLILVIVVIIGLFV. Residues 499–510 lie on the Cytoplasmic side of the membrane; that stretch reads CHRPSYFWKDMV.

It belongs to the GDA1/CD39 NTPase family. Homodimer; disulfide-linked. Requires Ca(2+) as cofactor. Mg(2+) is required as a cofactor. Post-translationally, N-glycosylated. Cleaved into two polypeptides that seem to stay together by non-covalent interactions. In terms of processing, the N-terminus is blocked. Post-translationally, palmitoylated on Cys-13; which is required for caveola targeting. In terms of tissue distribution, highest expression found in vascular endothelium, smooth muscle, spleen and lung (at protein level). High expression also found in stomach, duodenum, kidney, lymph node and aorta (at protein level).

The protein resides in the membrane. The protein localises to the caveola. The catalysed reaction is a ribonucleoside 5'-triphosphate + 2 H2O = a ribonucleoside 5'-phosphate + 2 phosphate + 2 H(+). The enzyme catalyses a ribonucleoside 5'-triphosphate + H2O = a ribonucleoside 5'-diphosphate + phosphate + H(+). It catalyses the reaction a ribonucleoside 5'-diphosphate + H2O = a ribonucleoside 5'-phosphate + phosphate + H(+). It carries out the reaction ATP + 2 H2O = AMP + 2 phosphate + 2 H(+). The catalysed reaction is ATP + H2O = ADP + phosphate + H(+). The enzyme catalyses ADP + H2O = AMP + phosphate + H(+). It catalyses the reaction CTP + 2 H2O = CMP + 2 phosphate + 2 H(+). It carries out the reaction CTP + H2O = CDP + phosphate + H(+). The catalysed reaction is CDP + H2O = CMP + phosphate + H(+). The enzyme catalyses GTP + 2 H2O = GMP + 2 phosphate + 2 H(+). It catalyses the reaction GTP + H2O = GDP + phosphate + H(+). It carries out the reaction GDP + H2O = GMP + phosphate + H(+). The catalysed reaction is ITP + 2 H2O = IMP + 2 phosphate + 2 H(+). The enzyme catalyses ITP + H2O = IDP + phosphate + H(+). It catalyses the reaction IDP + H2O = IMP + phosphate + H(+). It carries out the reaction UTP + 2 H2O = UMP + 2 phosphate + 2 H(+). The catalysed reaction is UTP + H2O = UDP + phosphate + H(+). The enzyme catalyses UDP + H2O = UMP + phosphate + H(+). With respect to regulation, the ATP diphosphohydrolase activity is decreased by half by sodium azide. Catalyzes the hydrolysis of both di- and triphosphate nucleotides (NDPs and NTPs) and hydrolyze NTPs to nucleotide monophosphates (NMPs) in two distinct successive phosphate-releasing steps, with NDPs as intermediates and participates in the regulation of extracellular levels of nucleotides. By hydrolyzing proinflammatory ATP and platelet-activating ADP to AMP, it blocks platelet aggregation and supports blood flow. The chain is Ectonucleoside triphosphate diphosphohydrolase 1 from Sus scrofa (Pig).